Here is a 611-residue protein sequence, read N- to C-terminus: Threonine--tRNA ligase (611 aa).

The tract at residues 1–27 (MAGPEPEPVSSAAATTPAPSAPVVLPK) is disordered. The span at 8 to 24 (PVSSAAATTPAPSAPVV) shows a compositional bias: low complexity. The segment at 209–502 (DHRRIGKDLD…MTENYAGDYP (294 aa)) is catalytic. 3 residues coordinate Zn(2+): Cys-302, His-353, and His-479.

The protein belongs to the class-II aminoacyl-tRNA synthetase family. Homodimer. It depends on Zn(2+) as a cofactor.

The protein localises to the cytoplasm. The enzyme catalyses tRNA(Thr) + L-threonine + ATP = L-threonyl-tRNA(Thr) + AMP + diphosphate + H(+). Catalyzes the attachment of threonine to tRNA(Thr) in a two-step reaction: L-threonine is first activated by ATP to form Thr-AMP and then transferred to the acceptor end of tRNA(Thr). Also edits incorrectly charged L-seryl-tRNA(Thr). This Synechococcus sp. (strain CC9605) protein is Threonine--tRNA ligase.